Reading from the N-terminus, the 293-residue chain is Nucleotide-binding protein Dole_0503 (293 aa).

11–18 contributes to the ATP binding site; that stretch reads GLSGSGKS. 62 to 65 is a GTP binding site; that stretch reads DLRE.

The protein belongs to the RapZ-like family.

In terms of biological role, displays ATPase and GTPase activities. In Desulfosudis oleivorans (strain DSM 6200 / JCM 39069 / Hxd3) (Desulfococcus oleovorans), this protein is Nucleotide-binding protein Dole_0503.